Reading from the N-terminus, the 267-residue chain is Putative phosphoenolpyruvate synthase regulatory protein (267 aa).

Residue 147–154 (GVSRSGKT) participates in ADP binding.

The protein belongs to the pyruvate, phosphate/water dikinase regulatory protein family. PSRP subfamily.

The enzyme catalyses [pyruvate, water dikinase] + ADP = [pyruvate, water dikinase]-phosphate + AMP + H(+). The catalysed reaction is [pyruvate, water dikinase]-phosphate + phosphate + H(+) = [pyruvate, water dikinase] + diphosphate. Functionally, bifunctional serine/threonine kinase and phosphorylase involved in the regulation of the phosphoenolpyruvate synthase (PEPS) by catalyzing its phosphorylation/dephosphorylation. The chain is Putative phosphoenolpyruvate synthase regulatory protein from Cupriavidus necator (strain ATCC 17699 / DSM 428 / KCTC 22496 / NCIMB 10442 / H16 / Stanier 337) (Ralstonia eutropha).